The primary structure comprises 949 residues: Valine--tRNA ligase (949 aa).

A 'HIGH' region motif is present at residues 40–50; sequence PNVTGSLHMGH. Positions 553 to 557 match the 'KMSKS' region motif; it reads KMSKS. Lys-556 serves as a coordination point for ATP. A coiled-coil region spans residues 877 to 949; it reads MAGLIDKEAE…QEQQDKIKAL (73 aa).

This sequence belongs to the class-I aminoacyl-tRNA synthetase family. ValS type 1 subfamily. As to quaternary structure, monomer.

It is found in the cytoplasm. It carries out the reaction tRNA(Val) + L-valine + ATP = L-valyl-tRNA(Val) + AMP + diphosphate. Catalyzes the attachment of valine to tRNA(Val). As ValRS can inadvertently accommodate and process structurally similar amino acids such as threonine, to avoid such errors, it has a 'posttransfer' editing activity that hydrolyzes mischarged Thr-tRNA(Val) in a tRNA-dependent manner. The sequence is that of Valine--tRNA ligase from Idiomarina loihiensis (strain ATCC BAA-735 / DSM 15497 / L2-TR).